Here is a 215-residue protein sequence, read N- to C-terminus: Ubiquitin-conjugating enzyme E2 S (215 aa).

The UBC core domain maps to 9-155; the sequence is DVIKRVVKEL…AKLFTSIHAS (147 aa). Cys93 acts as the Glycyl thioester intermediate in catalysis. The interval 159–215 is disordered; that stretch reads IDSNNNNENSTTTPTTTTTATTPSTNTASISSPVKKKTETTNSTTTKVQPKKSLKRL. Residues 161 to 190 are compositionally biased toward low complexity; it reads SNNNNENSTTTPTTTTTATTPSTNTASISS.

This sequence belongs to the ubiquitin-conjugating enzyme family.

It carries out the reaction S-ubiquitinyl-[E1 ubiquitin-activating enzyme]-L-cysteine + [E2 ubiquitin-conjugating enzyme]-L-cysteine = [E1 ubiquitin-activating enzyme]-L-cysteine + S-ubiquitinyl-[E2 ubiquitin-conjugating enzyme]-L-cysteine.. Its pathway is protein modification; protein ubiquitination. Its function is as follows. Catalyzes the covalent attachment of ubiquitin to other proteins. Acts as an essential factor of the anaphase promoting complex/cyclosome (APC/C), a cell cycle-regulated ubiquitin ligase that controls progression through mitosis. Acts by specifically elongating polyubiquitin chains initiated by the E2 enzyme ubch10 on APC/C substrates, enhancing the degradation of APC/C substrates by the proteasome and promoting mitotic exit. The polypeptide is Ubiquitin-conjugating enzyme E2 S (ube2s) (Dictyostelium discoideum (Social amoeba)).